Here is a 712-residue protein sequence, read N- to C-terminus: Amine oxidase [copper-containing] gamma 1 (712 aa).

Residues methionine 1–serine 24 form the signal peptide. Residues asparagine 146 and asparagine 173 are each glycosylated (N-linked (GlcNAc...) asparagine). Cysteine 188 and cysteine 210 are disulfide-bonded. Tyrosine 352–threonine 363 provides a ligand contact to substrate. Aspartate 354 serves as the catalytic Proton acceptor. A disulfide bridge connects residues cysteine 373 and cysteine 399. Residue valine 439–tyrosine 444 participates in substrate binding. The Schiff-base intermediate with substrate; via topaquinone role is filled by tyrosine 442. 2',4',5'-topaquinone is present on tyrosine 442. Residues histidine 499 and histidine 501 each contribute to the Cu cation site. Residues aspartate 508, methionine 509, and aspartate 510 each coordinate Mn(2+). N-linked (GlcNAc...) asparagine glycans are attached at residues asparagine 516 and asparagine 617. The Mn(2+) site is built by aspartate 651 and isoleucine 652. Histidine 662 contacts Cu cation.

Belongs to the copper/topaquinone oxidase family. Homodimer. Cu cation is required as a cofactor. Zn(2+) serves as cofactor. It depends on L-topaquinone as a cofactor. Requires Mn(2+) as cofactor. Topaquinone (TPQ) is generated by copper-dependent autoxidation of a specific tyrosyl residue. In terms of tissue distribution, mostly expressed in roots, stems and flowers, and, at lower levels, in leaves and cotyledons.

Its subcellular location is the secreted. It is found in the extracellular space. It localises to the apoplast. It catalyses the reaction a primary methyl amine + O2 + H2O = an aldehyde + H2O2 + NH4(+). It functions in the pathway amine and polyamine degradation; putrescine degradation. Its function is as follows. Copper amine oxidase that can use putrescine and spermidine as substrates. Required for abscisic acid- (ABA) and polyamine- (PA) and H(2)O(2)-dependent induced nitric oxide (NO) biosynthesis. Involved in ABA signal transduction and in responses to osmotic stress. This chain is Amine oxidase [copper-containing] gamma 1, found in Arabidopsis thaliana (Mouse-ear cress).